The primary structure comprises 149 residues: uncharacterized protein (149 aa).

Basic and acidic residues predominate over residues 1 to 15 (MQRQTGHMEDKKRTG). The disordered stretch occupies residues 1–32 (MQRQTGHMEDKKRTGLESQGTENAFSDGRDGK).

This is an uncharacterized protein from Gallus gallus (Chicken).